The chain runs to 228 residues: Acyl-protein thioesterase 1 (228 aa).

Active-site charge relay system residues include S119, D174, and H208.

Belongs to the AB hydrolase superfamily. AB hydrolase 2 family.

The protein localises to the cytoplasm. It is found in the nucleus. The catalysed reaction is S-hexadecanoyl-L-cysteinyl-[protein] + H2O = L-cysteinyl-[protein] + hexadecanoate + H(+). Its function is as follows. Hydrolyzes fatty acids from S-acylated cysteine residues in proteins with a strong preference for palmitoylated G-alpha proteins over other acyl substrates. Mediates the deacylation of G-alpha proteins such as GPA1 in vivo, but has weak or no activity toward palmitoylated Ras proteins. Has weak lysophospholipase activity in vitro; however such activity may not exist in vivo. The protein is Acyl-protein thioesterase 1 of Kluyveromyces lactis (strain ATCC 8585 / CBS 2359 / DSM 70799 / NBRC 1267 / NRRL Y-1140 / WM37) (Yeast).